Reading from the N-terminus, the 211-residue chain is MAKVLYITAHPHDEATSYSMATGKAFIESYKEANPNDEVVHIDLYKENIPHIDADVFSGWGKLQSGTGFEELSESEKAKVGRLGELSDQFASADKYVFVTPLWNFSFPPVMKAYLDSVAVAGKSFKYTEQGPVGLLTDKKAIHIQARGGYYSEGPAAEMEMGHRYIGIMMNFFGVPSFDGIFVEGHNAEPDKAQQIKEDAIARAKEAGKTF.

17 to 19 serves as a coordination point for FMN; sequence SYS.

Belongs to the azoreductase type 1 family. As to quaternary structure, homodimer. FMN is required as a cofactor.

The enzyme catalyses 2 a quinone + NADH + H(+) = 2 a 1,4-benzosemiquinone + NAD(+). The catalysed reaction is N,N-dimethyl-1,4-phenylenediamine + anthranilate + 2 NAD(+) = 2-(4-dimethylaminophenyl)diazenylbenzoate + 2 NADH + 2 H(+). Strongly inhibited by Pb(2+) and weakly inhibited by Cu(2+), Hg(2+) and Fe(2+). Stable in presence of Ag(+). Its function is as follows. Quinone reductase that provides resistance to thiol-specific stress caused by electrophilic quinones. Contributes to resistance to 2-methylhydroquinone (2-MHQ) and catechol. Exhibits NADH-dependent 2,6-dichloroindophenol (DCIP) oxidoreductase activity. Also exhibits azoreductase activity. Catalyzes the reductive cleavage of the azo bond in aromatic azo compounds to the corresponding amines. Can reduce methyl red. The sequence is that of FMN-dependent NADH:quinone oxidoreductase 2 from Bacillus subtilis (strain 168).